We begin with the raw amino-acid sequence, 257 residues long: Pantothenate synthetase (257 aa).

29-36 (MGNLHAGH) provides a ligand contact to ATP. Histidine 36 acts as the Proton donor in catalysis. Glutamine 60 provides a ligand contact to (R)-pantoate. Glutamine 60 lines the beta-alanine pocket. 145–148 (GEKD) is an ATP binding site. Residue glutamine 151 coordinates (R)-pantoate. Residues valine 174 and 182-185 (LSSR) contribute to the ATP site.

Belongs to the pantothenate synthetase family. In terms of assembly, homodimer.

The protein localises to the cytoplasm. It catalyses the reaction (R)-pantoate + beta-alanine + ATP = (R)-pantothenate + AMP + diphosphate + H(+). Its pathway is cofactor biosynthesis; (R)-pantothenate biosynthesis; (R)-pantothenate from (R)-pantoate and beta-alanine: step 1/1. In terms of biological role, catalyzes the condensation of pantoate with beta-alanine in an ATP-dependent reaction via a pantoyl-adenylate intermediate. In Coxiella burnetii (strain Dugway 5J108-111), this protein is Pantothenate synthetase.